The following is a 151-amino-acid chain: Aspartate carbamoyltransferase regulatory chain (151 aa).

Residues Cys-108, Cys-113, Cys-136, and Cys-139 each coordinate Zn(2+).

Belongs to the PyrI family. As to quaternary structure, contains catalytic and regulatory chains. The cofactor is Zn(2+).

In terms of biological role, involved in allosteric regulation of aspartate carbamoyltransferase. This Porphyromonas gingivalis (strain ATCC 33277 / DSM 20709 / CIP 103683 / JCM 12257 / NCTC 11834 / 2561) protein is Aspartate carbamoyltransferase regulatory chain.